The sequence spans 485 residues: Glutamyl-tRNA(Gln) amidotransferase subunit A (485 aa).

Catalysis depends on charge relay system residues Lys-76 and Ser-151. Ser-175 (acyl-ester intermediate) is an active-site residue.

This sequence belongs to the amidase family. GatA subfamily. As to quaternary structure, heterotrimer of A, B and C subunits.

It carries out the reaction L-glutamyl-tRNA(Gln) + L-glutamine + ATP + H2O = L-glutaminyl-tRNA(Gln) + L-glutamate + ADP + phosphate + H(+). Allows the formation of correctly charged Gln-tRNA(Gln) through the transamidation of misacylated Glu-tRNA(Gln) in organisms which lack glutaminyl-tRNA synthetase. The reaction takes place in the presence of glutamine and ATP through an activated gamma-phospho-Glu-tRNA(Gln). The polypeptide is Glutamyl-tRNA(Gln) amidotransferase subunit A (Thiobacillus denitrificans (strain ATCC 25259 / T1)).